Reading from the N-terminus, the 218-residue chain is MTDGDYDYLIKLLALGDSGVGKTTFLYRYTDNKFNPKFITTVGIDFREKRVVYDTQGADGSSGKAFKVHLQLWDTAGQERFRSLTTAFFRDAMGFLLMFDLTSQQSFLNVRNWMSQLQANAYCENPDIVLIGNKADLLDQREVNERQARELAEKYGIPYFETSAATGQNVEKSVETLLDLIMKRMEKCVEKTQVPDTVNGVNSGKVDGEKPAEKKCAC.

Thr-2 is subject to N-acetylthreonine. 16–24 (GDSGVGKTT) contributes to the GTP binding site. An Effector region motif is present at residues 38–46 (FITTVGIDF). Residues 74–78 (DTAGQ), 133–136 (NKAD), and 163–165 (SAA) each bind GTP. Cys-123 and Cys-188 are joined by a disulfide. Residues Cys-216 and Cys-218 are each lipidated (S-geranylgeranyl cysteine). Cys-218 bears the Cysteine methyl ester mark.

The protein belongs to the small GTPase superfamily. Rab family. Interacts with SYTL2, SYTL4, MYRIP and MLPH. Interacts with RPH3A and RPH3A. Interacts (GDP-bound form preferentially) with DENND10.

It localises to the membrane. The protein localises to the late endosome. The catalysed reaction is GTP + H2O = GDP + phosphate + H(+). Its activity is regulated as follows. Regulated by guanine nucleotide exchange factors (GEFs) which promote the exchange of bound GDP for free GTP, GTPase activating proteins (GAPs) which increase the GTP hydrolysis activity, and GDP dissociation inhibitors which inhibit the dissociation of the nucleotide from the GTPase. Activated by GEFs such as DENND10. Small GTPase which cycles between active GTP-bound and inactive GDP-bound states. In its active state, binds to a variety of effector proteins to regulate homeostasis of late endocytic pathway, including endosomal positioning, maturation and secretion. Plays a role in NTRK2/TRKB axonal anterograde transport by facilitating the association of NTRK2/TRKB with KLC1. May be involved in targeting uroplakins to urothelial apical membranes. The polypeptide is Ras-related protein Rab-27B (Rab27b) (Rattus norvegicus (Rat)).